We begin with the raw amino-acid sequence, 401 residues long: Argininosuccinate synthase (401 aa).

Residues 7–15 (AYSGGLDTS) and Ala-34 contribute to the ATP site. Tyr-85 and Ser-90 together coordinate L-citrulline. Gly-115 is an ATP binding site. L-aspartate-binding residues include Thr-117, Asn-121, and Asp-122. Asn-121 contacts L-citrulline. Arg-125, Ser-174, Ser-183, Glu-259, and Tyr-271 together coordinate L-citrulline.

This sequence belongs to the argininosuccinate synthase family. Type 1 subfamily. As to quaternary structure, homotetramer.

It is found in the cytoplasm. It carries out the reaction L-citrulline + L-aspartate + ATP = 2-(N(omega)-L-arginino)succinate + AMP + diphosphate + H(+). The protein operates within amino-acid biosynthesis; L-arginine biosynthesis; L-arginine from L-ornithine and carbamoyl phosphate: step 2/3. This is Argininosuccinate synthase from Desulfitobacterium hafniense (strain DSM 10664 / DCB-2).